Reading from the N-terminus, the 203-residue chain is MDVHDIAGTAVAGSPAPVPRARPPRPGKSMLQDVEQIRLAIEMIGLGARLQVLESEVSLPRVRLIRLYKELCGVSPPKGMLPFSTDWFVSWRPNAHASMLLGAYRFMTSRGSLDGIRAVLSSYRMYREQLCATGEASQLSFTRAWTLVRFYERGMLRLARCRDCRGEYVVQADDARHRYVCGLCLPPARAGKGRKPAPAALAG.

Zn(2+)-binding residues include C161, C164, C181, and C184.

This sequence belongs to the FlhC family. In terms of assembly, heterohexamer composed of two FlhC and four FlhD subunits. Each FlhC binds a FlhD dimer, forming a heterotrimer, and a hexamer assembles by dimerization of two heterotrimers. Zn(2+) is required as a cofactor.

Its subcellular location is the cytoplasm. Functionally, functions in complex with FlhD as a master transcriptional regulator that regulates transcription of several flagellar and non-flagellar operons by binding to their promoter region. Activates expression of class 2 flagellar genes, including fliA, which is a flagellum-specific sigma factor that turns on the class 3 genes. Also regulates genes whose products function in a variety of physiological pathways. In Cupriavidus necator (strain ATCC 17699 / DSM 428 / KCTC 22496 / NCIMB 10442 / H16 / Stanier 337) (Ralstonia eutropha), this protein is Flagellar transcriptional regulator FlhC.